Reading from the N-terminus, the 338-residue chain is Cytosolic sulfotransferase 16 (338 aa).

81 to 86 serves as a coordination point for 3'-phosphoadenylyl sulfate; sequence KTGTTW. The Proton acceptor role is filled by H143. Residues R165, S173, Y231, and 301–303 contribute to the 3'-phosphoadenylyl sulfate site; that span reads RKG.

Belongs to the sulfotransferase 1 family. Highly expressed in roots, stems and mature leaves. Low expression in young leaves and flowers. Barely detected in siliques.

The protein resides in the cytoplasm. It catalyses the reaction (Z)-desulfoglucotropeolin + 3'-phosphoadenylyl sulfate = (Z)-glucotropeolin + adenosine 3',5'-bisphosphate + H(+). It carries out the reaction (Z)-indolylmethyl desulfoglucosinolate + 3'-phosphoadenylyl sulfate = (Z)-glucobrassicin + adenosine 3',5'-bisphosphate + H(+). Its activity is regulated as follows. Inhibited by phosphoadenosine 5'-phosphate (PAP). Sulfotransferase that utilizes 3'-phospho-5'-adenylyl sulfate (PAPS) as sulfonate donor to catalyze the sulfate conjugation of desulfo-glucosinolates (dsGSs), the final step in the biosynthesis of the glucosinolate core structure. Substrate preference is desulfo-2-phenylethyl glucosinolate &gt; desulfo-indol-3-yl methyl glucosinolate &gt; desulfo-benzyl glucosinolate &gt; desulfo-6-methylthiohexyl glucosinolate &gt; desulfo-4-methylthiobutyl glucosinolate &gt; desulfo-3-methylthiopropyl glucosinolate &gt; desulfo-singrin &gt; desulfo-3-butenyl glucosinolate. The sequence is that of Cytosolic sulfotransferase 16 (SOT16) from Arabidopsis thaliana (Mouse-ear cress).